Here is a 278-residue protein sequence, read N- to C-terminus: Elongation factor Ts (278 aa).

Residues 80-83 form an involved in Mg(2+) ion dislocation from EF-Tu region; it reads TDFV.

It belongs to the EF-Ts family.

It is found in the cytoplasm. Functionally, associates with the EF-Tu.GDP complex and induces the exchange of GDP to GTP. It remains bound to the aminoacyl-tRNA.EF-Tu.GTP complex up to the GTP hydrolysis stage on the ribosome. The chain is Elongation factor Ts from Arthrobacter sp. (strain FB24).